The following is a 155-amino-acid chain: uncharacterized protein (155 aa).

This is an uncharacterized protein from Acanthamoeba polyphaga (Amoeba).